Here is a 77-residue protein sequence, read N- to C-terminus: Secapin (77 aa).

The signal sequence occupies residues 1-32; that stretch reads MKNYSKNATYLITVLLFSFVAMLLIIPSKCEA. A propeptide spanning residues 33 to 52 is cleaved from the precursor; sequence VSNDMQPLEARTADLVQQPR. Cys-61 and Cys-72 are oxidised to a cystine.

Belongs to the secapin family. In terms of tissue distribution, expressed by the venom gland.

The protein localises to the secreted. Nontoxic peptide. The polypeptide is Secapin (Apis cerana cerana (Oriental honeybee)).